Reading from the N-terminus, the 487-residue chain is 3-octaprenyl-4-hydroxybenzoate carboxy-lyase (487 aa).

N172 is a Mn(2+) binding site. Prenylated FMN is bound by residues 175 to 177, 189 to 191, and 194 to 195; these read IYR, RWL, and RG. Residue E238 participates in Mn(2+) binding. D287 functions as the Proton donor in the catalytic mechanism.

The protein belongs to the UbiD family. Homohexamer. It depends on prenylated FMN as a cofactor. Mn(2+) is required as a cofactor.

Its subcellular location is the cell membrane. It catalyses the reaction a 4-hydroxy-3-(all-trans-polyprenyl)benzoate + H(+) = a 2-(all-trans-polyprenyl)phenol + CO2. It participates in cofactor biosynthesis; ubiquinone biosynthesis. Catalyzes the decarboxylation of 3-octaprenyl-4-hydroxy benzoate to 2-octaprenylphenol, an intermediate step in ubiquinone biosynthesis. This is 3-octaprenyl-4-hydroxybenzoate carboxy-lyase from Dechloromonas aromatica (strain RCB).